Here is a 383-residue protein sequence, read N- to C-terminus: Acetylornithine deacetylase (383 aa).

His80 lines the Zn(2+) pocket. Residue Asp82 is part of the active site. Residue Asp112 participates in Zn(2+) binding. Glu144 is a catalytic residue. 3 residues coordinate Zn(2+): Glu145, Glu169, and His355.

This sequence belongs to the peptidase M20A family. ArgE subfamily. Homodimer. Zn(2+) is required as a cofactor. Co(2+) serves as cofactor. Requires glutathione as cofactor.

It is found in the cytoplasm. The catalysed reaction is N(2)-acetyl-L-ornithine + H2O = L-ornithine + acetate. It participates in amino-acid biosynthesis; L-arginine biosynthesis; L-ornithine from N(2)-acetyl-L-ornithine (linear): step 1/1. Functionally, catalyzes the hydrolysis of the amide bond of N(2)-acetylated L-amino acids. Cleaves the acetyl group from N-acetyl-L-ornithine to form L-ornithine, an intermediate in L-arginine biosynthesis pathway, and a branchpoint in the synthesis of polyamines. The sequence is that of Acetylornithine deacetylase from Salmonella arizonae (strain ATCC BAA-731 / CDC346-86 / RSK2980).